Reading from the N-terminus, the 193-residue chain is ATP-dependent protease subunit HslV (193 aa).

Thr12 is an active-site residue. Na(+)-binding residues include Ala167, Cys170, and Thr173.

It belongs to the peptidase T1B family. HslV subfamily. As to quaternary structure, a double ring-shaped homohexamer of HslV is capped on each side by a ring-shaped HslU homohexamer. The assembly of the HslU/HslV complex is dependent on binding of ATP.

It localises to the cytoplasm. It catalyses the reaction ATP-dependent cleavage of peptide bonds with broad specificity.. Its activity is regulated as follows. Allosterically activated by HslU binding. In terms of biological role, protease subunit of a proteasome-like degradation complex believed to be a general protein degrading machinery. The chain is ATP-dependent protease subunit HslV from Bartonella henselae (strain ATCC 49882 / DSM 28221 / CCUG 30454 / Houston 1) (Rochalimaea henselae).